The primary structure comprises 157 residues: Neutrophil recruitment protein (157 aa).

A signal peptide spans 1 to 19; it reads MCSIWLTFFLSFLILNTKA.

Belongs to the PBP/GOBP family. Interacts with mouse TLR1; the interaction promotes activation of canonical NF-kappa-B signaling in host macrophages. Interacts with human TLR1. Interacts with mouse TLR4; the interaction promotes activation of canonical NF-kappa-B signaling in host macrophages. Interacts with human TLR4. As to expression, female salivary gland (at protein level).

The protein resides in the secreted. Its function is as follows. Activates MyD88-dependent canonical NF-kappa-B signaling in host macrophages via interaction with host TLR1 and TLR4; this drives the expression of neutrophil chemoattractants, followed by the subsequent influx of neutrophils and recruitment of myeloid cells at the bite site. In terms of biological role, (Microbial infection) Promotes Zika virus infection in mouse model by facilitating recruitment of flavivirus-permissive myeloid cells at the bite site. Functionally, (Microbial infection) Promotes dengue virus infection in mouse model by facilitating recruitment of flavivirus-permissive myeloid cells at the bite site. The protein is Neutrophil recruitment protein of Aedes aegypti (Yellowfever mosquito).